The following is a 143-amino-acid chain: MFLGSHTPRLDDKGRLTLPAKFREELEGGLVITKGQERCLYVFPLAEFTRISESLRTAPVTAKALRDYSRVFFSSASDDVPDRQGRITIPPPLRAYAGLVRECVVNGANTRVEIWDSQRWDTYLADQEETFAEMSEEVLPGVI.

2 consecutive SpoVT-AbrB domains span residues 5-47 and 76-119; these read SHTP…PLAE and ASDD…DSQR.

It belongs to the MraZ family. As to quaternary structure, forms oligomers.

Its subcellular location is the cytoplasm. It localises to the nucleoid. This is Transcriptional regulator MraZ from Parafrankia sp. (strain EAN1pec).